The primary structure comprises 429 residues: Histidine--tRNA ligase (429 aa).

The protein belongs to the class-II aminoacyl-tRNA synthetase family. In terms of assembly, homodimer.

The protein localises to the cytoplasm. The catalysed reaction is tRNA(His) + L-histidine + ATP = L-histidyl-tRNA(His) + AMP + diphosphate + H(+). This Alkalilimnicola ehrlichii (strain ATCC BAA-1101 / DSM 17681 / MLHE-1) protein is Histidine--tRNA ligase.